The primary structure comprises 268 residues: Trypsin-like protease (268 aa).

An N-terminal signal peptide occupies residues 1–41 (MTHTTTIAAKRGGLALAKKAAAAGAVALAVASLQPVSAAHA). A propeptide spans 42-45 (ADAR) (activation peptide). One can recognise a Peptidase S1 domain in the interval 46–266 (VIGGKPAAQN…FAKDIAKAAS (221 aa)). A disulfide bond links Cys67 and Cys83. Residues His82 and Asp127 each act as charge relay system in the active site. Disulfide bonds link Cys187–Cys202 and Cys213–Cys242. The active-site Charge relay system is the Ser217.

This sequence belongs to the peptidase S1 family.

Protease that shows preferential cleavage after Arg and Lys residues. This is Trypsin-like protease from Streptomyces glaucescens.